Here is a 120-residue protein sequence, read N- to C-terminus: C-C motif chemokine 2 (120 aa).

An N-terminal signal peptide occupies residues 1 to 23 (MQRSSVLLCLLVIEATFCSLLMA). A Pyrrolidone carboxylic acid modification is found at Q24. 2 disulfide bridges follow: C33-C57 and C34-C73. The interval 91–120 (RTQQKQNSTAPQTSKPLNIRFTTQDPKNRS) is disordered. The segment covering 93-120 (QQKQNSTAPQTSKPLNIRFTTQDPKNRS) has biased composition (polar residues). N-linked (GlcNAc...) asparagine glycosylation is present at N97.

The protein belongs to the intercrine beta (chemokine CC) family. As to quaternary structure, monomer or homodimer; in equilibrium. Is tethered on endothelial cells by glycosaminoglycan (GAG) side chains of proteoglycans. Interacts with TNFAIP6 (via Link domain). Post-translationally, processing at the N-terminus can regulate receptor and target cell selectivity. Deletion of the N-terminal residue converts it from an activator of basophil to an eosinophil chemoattractant. N-Glycosylated.

The protein resides in the secreted. Its function is as follows. Acts as a ligand for C-C chemokine receptor CCR2. Signals through binding and activation of CCR2 and induces a strong chemotactic response and mobilization of intracellular calcium ions. Exhibits a chemotactic activity for monocytes and basophils but not neutrophils or eosinophils. Plays an important role in mediating peripheral nerve injury-induced neuropathic pain. Increases NMDA-mediated synaptic transmission in both dopamine D1 and D2 receptor-containing neurons, which may be caused by MAPK/ERK-dependent phosphorylation of GRIN2B/NMDAR2B. This is C-C motif chemokine 2 (CCL2) from Cavia porcellus (Guinea pig).